Consider the following 333-residue polypeptide: Phosphoribosylformylglycinamidine cyclo-ligase (333 aa).

It belongs to the AIR synthase family.

It localises to the cytoplasm. It catalyses the reaction 2-formamido-N(1)-(5-O-phospho-beta-D-ribosyl)acetamidine + ATP = 5-amino-1-(5-phospho-beta-D-ribosyl)imidazole + ADP + phosphate + H(+). Its pathway is purine metabolism; IMP biosynthesis via de novo pathway; 5-amino-1-(5-phospho-D-ribosyl)imidazole from N(2)-formyl-N(1)-(5-phospho-D-ribosyl)glycinamide: step 2/2. This Clostridium perfringens (strain 13 / Type A) protein is Phosphoribosylformylglycinamidine cyclo-ligase.